Reading from the N-terminus, the 347-residue chain is UPF0284 protein SSO2213 (347 aa).

It belongs to the UPF0284 family.

This Saccharolobus solfataricus (strain ATCC 35092 / DSM 1617 / JCM 11322 / P2) (Sulfolobus solfataricus) protein is UPF0284 protein SSO2213.